The following is an 86-amino-acid chain: Small ribosomal subunit protein uS17 (86 aa).

The protein belongs to the universal ribosomal protein uS17 family. Part of the 30S ribosomal subunit.

Functionally, one of the primary rRNA binding proteins, it binds specifically to the 5'-end of 16S ribosomal RNA. The polypeptide is Small ribosomal subunit protein uS17 (Marinomonas sp. (strain MWYL1)).